We begin with the raw amino-acid sequence, 246 residues long: Thiamine import ATP-binding protein ThiQ (246 aa).

Residues 10-239 form the ABC transporter domain; sequence VKLDALAFAY…QGPPAFARYL (230 aa). 41–48 lines the ATP pocket; the sequence is GPSGSGKS.

Belongs to the ABC transporter superfamily. Thiamine importer (TC 3.A.1.19.1) family. The complex is composed of two ATP-binding proteins (ThiQ), two transmembrane proteins (ThiP) and a solute-binding protein (ThiB).

The protein localises to the cell inner membrane. The catalysed reaction is thiamine(out) + ATP + H2O = thiamine(in) + ADP + phosphate + H(+). In terms of biological role, part of the ABC transporter complex ThiBPQ involved in thiamine import. Responsible for energy coupling to the transport system. This Chelativorans sp. (strain BNC1) protein is Thiamine import ATP-binding protein ThiQ.